The following is a 112-amino-acid chain: UPF0122 protein CPF_1968 (112 aa).

The protein belongs to the UPF0122 family.

Functionally, might take part in the signal recognition particle (SRP) pathway. This is inferred from the conservation of its genetic proximity to ftsY/ffh. May be a regulatory protein. In Clostridium perfringens (strain ATCC 13124 / DSM 756 / JCM 1290 / NCIMB 6125 / NCTC 8237 / Type A), this protein is UPF0122 protein CPF_1968.